We begin with the raw amino-acid sequence, 173 residues long: T-cell receptor beta-2 chain C region (173 aa).

Positions 1 to 146 (EDLRNVTPPK…GVLSATILYE (146 aa)) are c region. Residues N67 and N116 are each glycosylated (N-linked (GlcNAc...) asparagine). Residues 147–168 (ILLGKATLYAVLVSGLVLMAMV) form a helical membrane-spanning segment. The Cytoplasmic portion of the chain corresponds to 169–173 (KKKNS).

The protein localises to the membrane. The chain is T-cell receptor beta-2 chain C region from Mus musculus (Mouse).